A 299-amino-acid polypeptide reads, in one-letter code: Delta-9 desaturase-like 3 protein (299 aa).

Helical transmembrane passes span 38–57 and 58–76; these read AVGA…TWEA and FRFA…TFSY. A Histidine box-1 motif is present at residues 77 to 82; sequence HRNLTH. The Histidine box-2 motif lies at 114–118; sequence HRFHH. The next 2 membrane-spanning stretches (helical) occupy residues 174 to 194 and 198 to 218; these read IGLH…LPYL and VGVG…ACHI. The Histidine box-3 signature appears at 246–250; sequence HNNHH. The chain crosses the membrane as a helical span at residues 262–282; the sequence is WYQVDLTWYLIWFFQVLGLAT.

It belongs to the fatty acid desaturase type 1 family. It depends on Fe cation as a cofactor.

Its subcellular location is the endoplasmic reticulum membrane. It functions in the pathway lipid metabolism; polyunsaturated fatty acid biosynthesis. The polypeptide is Delta-9 desaturase-like 3 protein (Arabidopsis thaliana (Mouse-ear cress)).